We begin with the raw amino-acid sequence, 493 residues long: Cobyric acid synthase (493 aa).

Positions 246-440 (PIDIAVIKMP…IHGVFDGIVF (195 aa)) constitute a GATase cobBQ-type domain. Catalysis depends on Cys-326, which acts as the Nucleophile. His-432 is an active-site residue.

The protein belongs to the CobB/CobQ family. CobQ subfamily.

It functions in the pathway cofactor biosynthesis; adenosylcobalamin biosynthesis. Functionally, catalyzes amidations at positions B, D, E, and G on adenosylcobyrinic A,C-diamide. NH(2) groups are provided by glutamine, and one molecule of ATP is hydrogenolyzed for each amidation. This Clostridium botulinum (strain 657 / Type Ba4) protein is Cobyric acid synthase.